The chain runs to 409 residues: Broad specificity amino-acid racemase (409 aa).

The N-terminal stretch at methionine 1–alanine 23 is a signal peptide. Residues cysteine 70 and cysteine 96 are joined by a disulfide bond. The active-site Proton acceptor is lysine 74. An N6-(pyridoxal phosphate)lysine modification is found at lysine 74. Arginine 173 serves as a coordination point for substrate. Residue tyrosine 300 is the Proton acceptor of the active site. Methionine 348 serves as a coordination point for substrate.

It belongs to the alanine racemase family. Bsr subfamily. Homodimer. Pyridoxal 5'-phosphate is required as a cofactor.

The protein resides in the periplasm. The enzyme catalyses an L-alpha-amino acid = a D-alpha-amino acid. The catalysed reaction is L-lysine = D-lysine. It carries out the reaction L-arginine = D-arginine. It catalyses the reaction L-ornithine = D-ornithine. The enzyme catalyses L-alanine = D-alanine. The catalysed reaction is L-methionine = D-methionine. In terms of biological role, amino-acid racemase able to utilize a broad range of substrates. Is mostly active with lysine and arginine and, to a lesser extent, with ornithine, whereas is about 10 times less active with alanine, methionine and ethionine. With phenylalanine as substrate only a trace activity is detectable, and is inactive with glutamate. Plays a key role in the catabolism of D-arginine and D-lysine, that allows P.taetrolens strain NBRC 3460 to grow on these basic D-amino acids as a sole carbon source. The sequence is that of Broad specificity amino-acid racemase from Pseudomonas taetrolens.